A 306-amino-acid polypeptide reads, in one-letter code: Transcription initiation factor IIB 2 (306 aa).

The TFIIB-type zinc finger occupies 6 to 37 (PKRVCPICGSTEFIYDPRRGEIVCAKCGYVIE). The Zn(2+) site is built by Cys10, Cys13, Cys29, and Cys32. A run of 2 repeats spans residues 123 to 206 (SELD…ARGL) and 217 to 298 (EYVD…ELVE).

This sequence belongs to the TFIIB family.

Its function is as follows. Stabilizes TBP binding to an archaeal box-A promoter. Also responsible for recruiting RNA polymerase II to the pre-initiation complex (DNA-TBP-TFIIB). The sequence is that of Transcription initiation factor IIB 2 from Thermococcus kodakarensis (strain ATCC BAA-918 / JCM 12380 / KOD1) (Pyrococcus kodakaraensis (strain KOD1)).